Here is an 88-residue protein sequence, read N- to C-terminus: Small ribosomal subunit protein uS15 (88 aa).

The protein belongs to the universal ribosomal protein uS15 family. In terms of assembly, part of the 30S ribosomal subunit. Forms a bridge to the 50S subunit in the 70S ribosome, contacting the 23S rRNA.

Functionally, one of the primary rRNA binding proteins, it binds directly to 16S rRNA where it helps nucleate assembly of the platform of the 30S subunit by binding and bridging several RNA helices of the 16S rRNA. In terms of biological role, forms an intersubunit bridge (bridge B4) with the 23S rRNA of the 50S subunit in the ribosome. This Caldicellulosiruptor saccharolyticus (strain ATCC 43494 / DSM 8903 / Tp8T 6331) protein is Small ribosomal subunit protein uS15.